Reading from the N-terminus, the 338-residue chain is Acetoin:2,6-dichlorophenolindophenol oxidoreductase subunit beta (338 aa).

Tetramer of 2 alpha and 2 beta subunits.

Its pathway is ketone degradation; acetoin degradation. Its function is as follows. Catalyzes the 2,6-dichlorophenolindophenol-dependent cleavage of acetoin into acetate and acetaldehyde, in vitro. The beta subunit is probably not the catalytic subunit of the enzyme. The protein is Acetoin:2,6-dichlorophenolindophenol oxidoreductase subunit beta (acoB) of Cupriavidus necator (strain ATCC 17699 / DSM 428 / KCTC 22496 / NCIMB 10442 / H16 / Stanier 337) (Ralstonia eutropha).